The primary structure comprises 101 residues: UPF0235 protein Cpha266_2081 (101 aa).

The protein belongs to the UPF0235 family.

The polypeptide is UPF0235 protein Cpha266_2081 (Chlorobium phaeobacteroides (strain DSM 266 / SMG 266 / 2430)).